The chain runs to 57 residues: uncharacterized protein (57 aa).

The chain crosses the membrane as a helical span at residues 10–27 (FGLLWLIIGSEAFHLNAL). Positions 28–55 (KQDHLERMKQYDAKIRLAKHEFDDTSNE) form a coiled coil.

It localises to the membrane. This is an uncharacterized protein from Schizosaccharomyces pombe (strain 972 / ATCC 24843) (Fission yeast).